A 159-amino-acid chain; its full sequence is SsrA-binding protein (159 aa).

A disordered region spans residues 131-159 (KGKKLHDKRESEKERDWNRQKSRLLKDNG). Residues 137-159 (DKRESEKERDWNRQKSRLLKDNG) are compositionally biased toward basic and acidic residues.

Belongs to the SmpB family.

It localises to the cytoplasm. In terms of biological role, required for rescue of stalled ribosomes mediated by trans-translation. Binds to transfer-messenger RNA (tmRNA), required for stable association of tmRNA with ribosomes. tmRNA and SmpB together mimic tRNA shape, replacing the anticodon stem-loop with SmpB. tmRNA is encoded by the ssrA gene; the 2 termini fold to resemble tRNA(Ala) and it encodes a 'tag peptide', a short internal open reading frame. During trans-translation Ala-aminoacylated tmRNA acts like a tRNA, entering the A-site of stalled ribosomes, displacing the stalled mRNA. The ribosome then switches to translate the ORF on the tmRNA; the nascent peptide is terminated with the 'tag peptide' encoded by the tmRNA and targeted for degradation. The ribosome is freed to recommence translation, which seems to be the essential function of trans-translation. The sequence is that of SsrA-binding protein from Rhizobium leguminosarum bv. trifolii (strain WSM2304).